A 2133-amino-acid polypeptide reads, in one-letter code: Coagulation factor VIII (2133 aa).

The first 19 residues, 1–19 (MQLELSTCVFLCLLPLGFS), serve as a signal peptide directing secretion. Plastocyanin-like domains follow at residues 20 to 199 (AIRR…LLVC), 207 to 357 (ERTQ…QLRR), 399 to 573 (KTWV…LLIC), and 583 to 730 (NQMM…VYSC). 2 consecutive F5/8 type A domains span residues 20-357 (AIRR…QLRR) and 399-730 (KTWV…VYSC). A disulfide bond links C173 and C199. N233 and N259 each carry an N-linked (GlcNAc...) asparagine glycan. C547 and C573 are oxidised to a cystine. N601 carries N-linked (GlcNAc...) asparagine glycosylation. 3 positions are modified to sulfotyrosine: Y737, Y738, and Y742. Disordered regions lie at residues 760 to 790 (SFAQNSRPPSASQKQFQTITSPEDDVELDPQ) and 804 to 914 (PSGD…PHPQ). Positions 760 to 1599 (SFAQNSRPPS…LISYPDDQEQ (840 aa)) are b. Over residues 761 to 780 (FAQNSRPPSASQKQFQTITS) the composition is skewed to polar residues. Composition is skewed to basic and acidic residues over residues 853 to 862 (LRPELHHSAE) and 868 to 878 (EPEKELKKLDS). A compositionally biased stretch (low complexity) spans 879 to 888 (KMSSSSDLLK). A compositionally biased stretch (polar residues) spans 889-900 (TSPTIPSDTLSA). N929, N985, and N1025 each carry an N-linked (GlcNAc...) asparagine glycan. Residues 1042 to 1078 (LGKNPLSSERGPSPELLTSSGSGKSVKGQSSGQGRIR) form a disordered region. The span at 1060–1075 (SSGSGKSVKGQSSGQG) shows a compositional bias: low complexity. Residue N1111 is glycosylated (N-linked (GlcNAc...) asparagine). Positions 1160–1179 (PSVEGFDGGSHAPVPQDSRS) are disordered. N1181, N1208, N1245, N1265, and N1335 each carry an N-linked (GlcNAc...) asparagine glycan. A disordered region spans residues 1200 to 1221 (EAPLEAPGNRTGPGPRSAVPRR). 2 disordered regions span residues 1358–1391 (LNKVNRPGRTPSKLLGPPMPKEWESLEKSPKSTA) and 1406–1441 (ESNHSIAAKNEGQAETQREAAWTKQGGPGRLCAPKP). Residues 1378 to 1387 (KEWESLEKSP) show a composition bias toward basic and acidic residues. N-linked (GlcNAc...) asparagine glycosylation is found at N1408 and N1611. Plastocyanin-like domains are found at residues 1495–1659 (RTRH…LLIC) and 1669–1822 (GRQV…SKEC). Residues 1495 to 1822 (RTRHYFIAAV…TTFLVYSKEC (328 aa)) enclose the F5/8 type A 3 domain. 3 cysteine pairs are disulfide-bonded: C1633–C1659, C1822–C1970, and C1975–C2127. F5/8 type C domains lie at 1822–1970 (CQAP…LMGC) and 1975–2127 (CSMP…VLGC). N-linked (GlcNAc...) asparagine glycosylation occurs at N1919.

This sequence belongs to the multicopper oxidase family. Interacts with vWF. vWF binding is essential for the stabilization of F8 in circulation. In terms of processing, proteolytically cleaved by cathepsin CTSG to produce a partially activated form.

The protein resides in the secreted. The protein localises to the extracellular space. Factor VIII, along with calcium and phospholipid, acts as a cofactor for factor IXa when it converts factor X to the activated form, factor Xa. The protein is Coagulation factor VIII (F8) of Sus scrofa (Pig).